Here is a 101-residue protein sequence, read N- to C-terminus: MAKKSMIEREKKRQRLVEKYREKRQQLKAAMADPNIDQATRMELHAQLQKLPRASSPTRLRNRCWKTGRPRGYFRDFGLCRNSLREMAHRGLLPGVVKASW.

This sequence belongs to the universal ribosomal protein uS14 family. In terms of assembly, part of the 30S ribosomal subunit. Contacts proteins S3 and S10.

Functionally, binds 16S rRNA, required for the assembly of 30S particles and may also be responsible for determining the conformation of the 16S rRNA at the A site. This is Small ribosomal subunit protein uS14 from Synechococcus sp. (strain JA-3-3Ab) (Cyanobacteria bacterium Yellowstone A-Prime).